The primary structure comprises 1071 residues: Carbamoyl phosphate synthase large chain (1071 aa).

Residues 1-403 (MPKRTDLKSI…SFQKALRGLE (403 aa)) are carboxyphosphate synthetic domain. Residues arginine 129, arginine 169, glycine 175, glycine 176, glutamine 208, valine 210, glutamate 215, glycine 241, valine 242, histidine 243, glutamine 285, and glutamate 299 each contribute to the ATP site. Positions 133–328 (KEAMEKIGLS…IAKVAAKLAV (196 aa)) constitute an ATP-grasp 1 domain. Mg(2+) contacts are provided by glutamine 285, glutamate 299, and asparagine 301. Residues glutamine 285, glutamate 299, and asparagine 301 each coordinate Mn(2+). The tract at residues 404–548 (TGLCGFNPRS…YSTYEEECES (145 aa)) is oligomerization domain. A carbamoyl phosphate synthetic domain region spans residues 549 to 930 (RPSDRKKVMI…AYYKAQLGAG (382 aa)). The ATP-grasp 2 domain occupies 673–864 (QKVLNDLGLR…LAKVGARCMA (192 aa)). Residues arginine 709, phenylalanine 748, leucine 750, glutamate 755, glycine 780, isoleucine 781, histidine 782, serine 783, glutamine 823, and glutamate 835 each contribute to the ATP site. 3 residues coordinate Mg(2+): glutamine 823, glutamate 835, and asparagine 837. Mn(2+) contacts are provided by glutamine 823, glutamate 835, and asparagine 837. Residues 931 to 1071 (ERLNPTGKIF…ELHGRLKNRN (141 aa)) form the MGS-like domain. An allosteric domain region spans residues 931-1071 (ERLNPTGKIF…ELHGRLKNRN (141 aa)).

This sequence belongs to the CarB family. In terms of assembly, composed of two chains; the small (or glutamine) chain promotes the hydrolysis of glutamine to ammonia, which is used by the large (or ammonia) chain to synthesize carbamoyl phosphate. Tetramer of heterodimers (alpha,beta)4. Mg(2+) serves as cofactor. The cofactor is Mn(2+).

The enzyme catalyses hydrogencarbonate + L-glutamine + 2 ATP + H2O = carbamoyl phosphate + L-glutamate + 2 ADP + phosphate + 2 H(+). The catalysed reaction is hydrogencarbonate + NH4(+) + 2 ATP = carbamoyl phosphate + 2 ADP + phosphate + 2 H(+). The protein operates within amino-acid biosynthesis; L-arginine biosynthesis; carbamoyl phosphate from bicarbonate: step 1/1. It functions in the pathway pyrimidine metabolism; UMP biosynthesis via de novo pathway; (S)-dihydroorotate from bicarbonate: step 1/3. In terms of biological role, large subunit of the glutamine-dependent carbamoyl phosphate synthetase (CPSase). CPSase catalyzes the formation of carbamoyl phosphate from the ammonia moiety of glutamine, carbonate, and phosphate donated by ATP, constituting the first step of 2 biosynthetic pathways, one leading to arginine and/or urea and the other to pyrimidine nucleotides. The large subunit (synthetase) binds the substrates ammonia (free or transferred from glutamine from the small subunit), hydrogencarbonate and ATP and carries out an ATP-coupled ligase reaction, activating hydrogencarbonate by forming carboxy phosphate which reacts with ammonia to form carbamoyl phosphate. In Neisseria meningitidis serogroup B (strain ATCC BAA-335 / MC58), this protein is Carbamoyl phosphate synthase large chain.